A 353-amino-acid polypeptide reads, in one-letter code: Rhodopsin (353 aa).

At 1–36 (MNGTEGPYFYIPMVNTTGIVRSPYEYPQYYLVNPAA) the chain is on the extracellular side. 2 N-linked (GlcNAc...) asparagine glycosylation sites follow: N2 and N15. Residues 37–61 (YAALGAYMFLLILLGFPINFLTLYV) form a helical membrane-spanning segment. Over 62 to 73 (TIEHKKLRTPLN) the chain is Cytoplasmic. Residues 74–96 (YILLNLAVANLFMVFGGFTTTMY) form a helical membrane-spanning segment. The Extracellular portion of the chain corresponds to 97 to 110 (TSMHGYFVLGRLGC). Residues C110 and C187 are joined by a disulfide bond. The helical transmembrane segment at 111 to 133 (NLEGFFATLGGEIALWSLVVLAV) threads the bilayer. The 'Ionic lock' involved in activated form stabilization motif lies at 134–136 (ERW). The Cytoplasmic segment spans residues 134–152 (ERWMVVCKPISNFRFGENH). The helical transmembrane segment at 153-173 (AIMGLAFTWVMASACAVPPLV) threads the bilayer. At 174 to 202 (GWSRYIPEGMQCSCGIDYYTRAEGFNNES) the chain is on the extracellular side. The N-linked (GlcNAc...) asparagine glycan is linked to N200. The chain crosses the membrane as a helical span at residues 203–224 (FVIYMFVCHFLIPLVVVFFCYG). Over 225–252 (RLLCAVKEAAAAQQESETTQRAEREVSR) the chain is Cytoplasmic. Residues 253-274 (MVVIMVVAFLICWCPYAGVAWY) traverse the membrane as a helical segment. Over 275-286 (IFTHQGSEFGPL) the chain is Extracellular. A helical membrane pass occupies residues 287 to 308 (FMTFPAFFAKSSSIYNPMIYIC). K296 is subject to N6-(retinylidene)lysine. Over 309 to 353 (MNKQFRHCMITTLCCGKNPFEEEEGASTTSKTEASSVSSSSVSPA) the chain is Cytoplasmic. S-palmitoyl cysteine attachment occurs at residues C322 and C323. Positions 330-353 (EEEGASTTSKTEASSVSSSSVSPA) are disordered. Residues 334–353 (ASTTSKTEASSVSSSSVSPA) show a composition bias toward low complexity.

Belongs to the G-protein coupled receptor 1 family. Opsin subfamily. Post-translationally, phosphorylated on some or all of the serine and threonine residues present in the C-terminal region. In terms of processing, contains one covalently linked retinal chromophore.

The protein resides in the membrane. Its subcellular location is the cell projection. It localises to the cilium. It is found in the photoreceptor outer segment. In terms of biological role, photoreceptor required for image-forming vision at low light intensity. While most salt water fish species use retinal as chromophore, most freshwater fish use 3-dehydroretinal, or a mixture of retinal and 3-dehydroretinal. Light-induced isomerization of 11-cis to all-trans retinal triggers a conformational change that activates signaling via G-proteins. Subsequent receptor phosphorylation mediates displacement of the bound G-protein alpha subunit by arrestin and terminates signaling. The polypeptide is Rhodopsin (rho) (Mugil cephalus (Flathead mullet)).